The following is a 1040-amino-acid chain: Multidrug resistance protein MdtB (1040 aa).

The next 12 helical transmembrane spans lie at 25–45 (LLMA…PVAA), 347–367 (LMLA…NIPA), 369–389 (IIPG…MVFL), 396–416 (LTLM…IVVI), 440–460 (IGFT…PLLF), 472–492 (FAVT…TLTP), 537–557 (WLTL…WIVI), 863–883 (LGST…VLGV), 888–908 (FIHP…ALLA), 910–930 (IIAG…LIGI), 968–988 (ILMT…STGV), and 998–1018 (IAMV…TPVI).

This sequence belongs to the resistance-nodulation-cell division (RND) (TC 2.A.6) family. MdtB subfamily. In terms of assembly, part of a tripartite efflux system composed of MdtA, MdtB and MdtC. MdtB forms a heteromultimer with MdtC.

It is found in the cell inner membrane. In Salmonella schwarzengrund (strain CVM19633), this protein is Multidrug resistance protein MdtB.